The sequence spans 174 residues: Centrosomal protein 20 (174 aa).

The interval 1–104 is necessary and sufficient for homooligomerization and localization to centrosomes and pericentriolar satellites; it reads MATVAELKAV…AFEESKDNTI (104 aa). The LisH domain maps to 49–81; sequence ENLLINELIREYLEFNKYKYTASVLIAESGQPV. A disordered region spans residues 129-174; the sequence is GPSLQPSDPSLGRQPSRRKPMDDHLRKEEQKSTNIEDLHVSQAVNR. Residue Ser-144 is modified to Phosphoserine. Over residues 147–167 the composition is skewed to basic and acidic residues; it reads KPMDDHLRKEEQKSTNIEDLH.

This sequence belongs to the CEP43 family. In terms of assembly, homooligomer; probably required for localization to centrosomes. Forms a complex with KIAA0753/OFIP and OFD1; within this complex may stabilize the interaction between OFD1 and KIAA0753/OFIP. Interacts with PCM1; this interaction may be mediated by KIAA0753/OFIP. Interacts with PLK1 in later G1, S, G2 and M phases of the cell cycle; this interaction recruits PLK1 to centrosomes. In terms of tissue distribution, widely expressed. Detected in brain, heart, kidney, liver, lung, skeletal muscle, placenta and intestine.

The protein localises to the cytoplasm. The protein resides in the cytoskeleton. It localises to the microtubule organizing center. Its subcellular location is the centrosome. It is found in the centriole. The protein localises to the cell projection. The protein resides in the cilium. It localises to the cilium basal body. Its subcellular location is the cytoplasmic granule. It is found in the centriolar satellite. Functionally, involved in the biogenesis of cilia. Required for the recruitment of PLK1 to centrosomes and S phase progression. The chain is Centrosomal protein 20 from Homo sapiens (Human).